A 518-amino-acid chain; its full sequence is 2-isopropylmalate synthase (518 aa).

Residues I4–K266 form the Pyruvate carboxyltransferase domain. Mn(2+) contacts are provided by D13, H201, H203, and N237. Positions D391–S518 are regulatory domain.

Belongs to the alpha-IPM synthase/homocitrate synthase family. LeuA type 1 subfamily. In terms of assembly, homodimer. The cofactor is Mn(2+).

It is found in the cytoplasm. The catalysed reaction is 3-methyl-2-oxobutanoate + acetyl-CoA + H2O = (2S)-2-isopropylmalate + CoA + H(+). Its pathway is amino-acid biosynthesis; L-leucine biosynthesis; L-leucine from 3-methyl-2-oxobutanoate: step 1/4. Catalyzes the condensation of the acetyl group of acetyl-CoA with 3-methyl-2-oxobutanoate (2-ketoisovalerate) to form 3-carboxy-3-hydroxy-4-methylpentanoate (2-isopropylmalate). In Bacillus licheniformis (strain ATCC 14580 / DSM 13 / JCM 2505 / CCUG 7422 / NBRC 12200 / NCIMB 9375 / NCTC 10341 / NRRL NRS-1264 / Gibson 46), this protein is 2-isopropylmalate synthase.